The primary structure comprises 407 residues: Type II secretion system protein L (407 aa).

Over 1-257 the chain is Cytoplasmic; that stretch reads MEGSVSEFLT…WLRYWQIWRK (257 aa). The helical transmembrane segment at 258–275 threads the bilayer; that stretch reads VAIAAGLFVAVSISYSLF. The Periplasmic segment spans residues 276 to 407; the sequence is QAHQYEAQAD…VFGVFVVKPK (132 aa).

The protein belongs to the GSP L family. As to quaternary structure, type II secretion system is composed of four main components: the outer membrane complex, the inner membrane complex, the cytoplasmic secretion ATPase and the periplasm-spanning pseudopilus. Forms homodimers. Interacts with EpsM/GspM. Interacts with EpsE/GspE and EpsF/GspF.

It is found in the cell inner membrane. Inner membrane component of the type II secretion system required for the energy-dependent secretion of extracellular factors such as proteases and toxins from the periplasm. Plays a role in the complex assembly and recruits EpsM resulting in a stable complex in the inner membrane. Provides thus a link between the energy-providing EpsE protein in the cytoplasm and the rest of the T2SS machinery. This Vibrio cholerae serotype O1 (strain ATCC 39315 / El Tor Inaba N16961) protein is Type II secretion system protein L (epsL).